The sequence spans 280 residues: Fructose-1,6-bisphosphatase class 1 (280 aa).

Residues Glu64, Asp83, Leu85, and Asp86 each coordinate Mg(2+). Residues 86–89 (DGSS), Tyr189, and Lys220 each bind substrate. Glu226 serves as a coordination point for Mg(2+).

Belongs to the FBPase class 1 family. In terms of assembly, homotetramer. Mg(2+) serves as cofactor.

Its subcellular location is the cytoplasm. It carries out the reaction beta-D-fructose 1,6-bisphosphate + H2O = beta-D-fructose 6-phosphate + phosphate. The protein operates within carbohydrate biosynthesis; gluconeogenesis. This Campylobacter jejuni subsp. doylei (strain ATCC BAA-1458 / RM4099 / 269.97) protein is Fructose-1,6-bisphosphatase class 1.